A 379-amino-acid chain; its full sequence is Glutamate 5-kinase (379 aa).

An ATP-binding site is contributed by lysine 15. The substrate site is built by serine 56, aspartate 143, and asparagine 155. 175 to 176 provides a ligand contact to ATP; sequence SD. The 78-residue stretch at 281–358 folds into the PUA domain; that stretch reads RGTLAIDAGA…SDAAQLLGVR (78 aa).

Belongs to the glutamate 5-kinase family.

The protein localises to the cytoplasm. The catalysed reaction is L-glutamate + ATP = L-glutamyl 5-phosphate + ADP. Its pathway is amino-acid biosynthesis; L-proline biosynthesis; L-glutamate 5-semialdehyde from L-glutamate: step 1/2. Its function is as follows. Catalyzes the transfer of a phosphate group to glutamate to form L-glutamate 5-phosphate. This Nitrobacter winogradskyi (strain ATCC 25391 / DSM 10237 / CIP 104748 / NCIMB 11846 / Nb-255) protein is Glutamate 5-kinase.